The primary structure comprises 677 residues: Methionine--tRNA ligase (677 aa).

The short motif at 15–25 (PYANGSIHLGH) is the 'HIGH' region element. C146, C149, C159, and C162 together coordinate Zn(2+). The 'KMSKS' region signature appears at 333–337 (KMSKS). An ATP-binding site is contributed by K336. The 103-residue stretch at 575–677 (DFAKVDLRVA…AGAKPGHQVK (103 aa)) folds into the tRNA-binding domain.

It belongs to the class-I aminoacyl-tRNA synthetase family. MetG type 1 subfamily. In terms of assembly, homodimer. Requires Zn(2+) as cofactor.

The protein resides in the cytoplasm. It catalyses the reaction tRNA(Met) + L-methionine + ATP = L-methionyl-tRNA(Met) + AMP + diphosphate. In terms of biological role, is required not only for elongation of protein synthesis but also for the initiation of all mRNA translation through initiator tRNA(fMet) aminoacylation. In Escherichia coli O81 (strain ED1a), this protein is Methionine--tRNA ligase.